The primary structure comprises 162 residues: UPF0114 protein Pput_0713 (162 aa).

4 consecutive transmembrane segments (helical) span residues 15 to 35 (LLAP…LKFF), 53 to 73 (LILV…LVMV), 109 to 126 (VAAS…RVFM), and 136 to 156 (LMWY…MGYL).

This sequence belongs to the UPF0114 family.

The protein localises to the cell membrane. The polypeptide is UPF0114 protein Pput_0713 (Pseudomonas putida (strain ATCC 700007 / DSM 6899 / JCM 31910 / BCRC 17059 / LMG 24140 / F1)).